Reading from the N-terminus, the 471-residue chain is Ammonium transporter Rh type B (471 aa).

Over 1-13 (MAGSPSRAAGRRL) the chain is Cytoplasmic. The chain crosses the membrane as a helical span at residues 14–33 (QLPLLSFLQGATAVLFAVFV). Over 34–60 (RYNHKTDAALWHRGNHSNADNEFYFRY) the chain is Extracellular. Asn48 is a glycosylation site (N-linked (GlcNAc...) asparagine). The helical transmembrane segment at 61 to 81 (PSFQDVHAMVFVGFGFLMVFL) threads the bilayer. Residues 82-85 (QRYG) are Cytoplasmic-facing. The helical transmembrane segment at 86–106 (FSSVGFTFLLAAFALQWSTLV) threads the bilayer. At 107 to 123 (QGFLHSFHGGHIHVGVE) the chain is on the extracellular side. Residues 124 to 144 (SMINADFCAGAVLISFGAVLG) traverse the membrane as a helical segment. Topologically, residues 145-148 (KTGP) are cytoplasmic. A helical membrane pass occupies residues 149–169 (AQLLLMALLEVVLFGINEFVL). Residues 170 to 177 (LHLLGVRD) are Extracellular-facing. Residues 178 to 200 (AGGSMTIHTFGAYFGLVLSQVLY) form a helical membrane-spanning segment. The Cytoplasmic portion of the chain corresponds to 201-217 (RPQLEKSKHRQGLYHSD). A helical transmembrane segment spans residues 218–238 (LFAMIGTIFLWIFWPSFNAAL). Residues 239 to 249 (TSLGAGQHRTA) lie on the Extracellular side of the membrane. A helical transmembrane segment spans residues 250 to 270 (LNTYYSLAASTLGTFALSALV). At 271 to 280 (GEDGRLDMVH) the chain is on the cytoplasmic side. Residues 281–301 (IQNAALAGRVVVGTSSEMMLT) traverse the membrane as a helical segment. Residue Pro302 is a topological domain, extracellular. The helical transmembrane segment at 303-323 (FGALAAGFLAGTVSTLGYKFF) threads the bilayer. The Cytoplasmic portion of the chain corresponds to 324 to 344 (TPILESKFKVQDTCGVHNLHG). The chain crosses the membrane as a helical span at residues 345 to 365 (MPGVLGVLLGVLVAGLATHEA). At 366–391 (YGDGLESVFPLIAEGQRSATSQAMYQ) the chain is on the extracellular side. A helical membrane pass occupies residues 392 to 412 (LFGLFVTLMFASVGGGLGGLL). Residues 413–471 (LKLPFLDSPPDSQCYEDQVHWQAPGATLSPLPTPAFQVPGEHEDKAQRPLRVEEADTQA) are Cytoplasmic-facing. Residues 414–422 (KLPFLDSPP) form an interaction with ANK3 region. A Basolateral sorting signal motif is present at residues 427 to 430 (YEDQ). Positions 437–471 (GATLSPLPTPAFQVPGEHEDKAQRPLRVEEADTQA) are disordered. Residues 452-471 (GEHEDKAQRPLRVEEADTQA) are compositionally biased toward basic and acidic residues.

It belongs to the ammonium transporter (TC 2.A.49) family. Rh subfamily. As to quaternary structure, interacts (via C-terminus) with ANK2 and ANK3; required for targeting to the basolateral membrane. N-glycosylated.

The protein localises to the cell membrane. Its subcellular location is the basolateral cell membrane. It carries out the reaction NH4(+)(in) = NH4(+)(out). It catalyses the reaction methylamine(out) = methylamine(in). The catalysed reaction is CO2(out) = CO2(in). Functionally, ammonium transporter involved in the maintenance of acid-base homeostasis. Transports ammonium and its related derivative methylammonium across the basolateral plasma membrane of epithelial cells likely contributing to renal transepithelial ammonia transport and ammonia metabolism. May transport either NH4(+) or NH3 ammonia species predominantly mediating an electrogenic NH4(+) transport. May act as a CO2 channel providing for renal acid secretion. The polypeptide is Ammonium transporter Rh type B (RHBG) (Pongo pygmaeus (Bornean orangutan)).